A 659-amino-acid polypeptide reads, in one-letter code: UvrABC system protein B (659 aa).

One can recognise a Helicase ATP-binding domain in the interval 25–414; that stretch reads EGVRRGAREQ…PSLVVEQIVR (390 aa). Residue 38 to 45 coordinates ATP; sequence GATGTGKT. Positions 91-114 match the Beta-hairpin motif; that stretch reads YYDYYQPEAYIPTTDTYIEKDALI. The Helicase C-terminal domain occupies 431–597; the sequence is QIDDLYAEIR…TIVKPVRDVI (167 aa). The 36-residue stretch at 620-655 folds into the UVR domain; it reads PKVVAKLRKEMMQAAKDLDFERAAEIRDIIFELEKK.

The protein belongs to the UvrB family. In terms of assembly, forms a heterotetramer with UvrA during the search for lesions. Interacts with UvrC in an incision complex.

It localises to the cytoplasm. Its function is as follows. The UvrABC repair system catalyzes the recognition and processing of DNA lesions. A damage recognition complex composed of 2 UvrA and 2 UvrB subunits scans DNA for abnormalities. Upon binding of the UvrA(2)B(2) complex to a putative damaged site, the DNA wraps around one UvrB monomer. DNA wrap is dependent on ATP binding by UvrB and probably causes local melting of the DNA helix, facilitating insertion of UvrB beta-hairpin between the DNA strands. Then UvrB probes one DNA strand for the presence of a lesion. If a lesion is found the UvrA subunits dissociate and the UvrB-DNA preincision complex is formed. This complex is subsequently bound by UvrC and the second UvrB is released. If no lesion is found, the DNA wraps around the other UvrB subunit that will check the other stand for damage. This chain is UvrABC system protein B, found in Symbiobacterium thermophilum (strain DSM 24528 / JCM 14929 / IAM 14863 / T).